A 74-amino-acid polypeptide reads, in one-letter code: ATP synthase subunit c (74 aa).

The next 2 membrane-spanning stretches (helical) occupy residues 9–29 (IGAG…GNIF) and 54–74 (FALT…ILFV).

Belongs to the ATPase C chain family. F-type ATPases have 2 components, F(1) - the catalytic core - and F(0) - the membrane proton channel. F(1) has five subunits: alpha(3), beta(3), gamma(1), delta(1), epsilon(1). F(0) has three main subunits: a(1), b(2) and c(10-14). The alpha and beta chains form an alternating ring which encloses part of the gamma chain. F(1) is attached to F(0) by a central stalk formed by the gamma and epsilon chains, while a peripheral stalk is formed by the delta and b chains.

The protein resides in the cell inner membrane. Its function is as follows. F(1)F(0) ATP synthase produces ATP from ADP in the presence of a proton or sodium gradient. F-type ATPases consist of two structural domains, F(1) containing the extramembraneous catalytic core and F(0) containing the membrane proton channel, linked together by a central stalk and a peripheral stalk. During catalysis, ATP synthesis in the catalytic domain of F(1) is coupled via a rotary mechanism of the central stalk subunits to proton translocation. Key component of the F(0) channel; it plays a direct role in translocation across the membrane. A homomeric c-ring of between 10-14 subunits forms the central stalk rotor element with the F(1) delta and epsilon subunits. The protein is ATP synthase subunit c of Gluconacetobacter diazotrophicus (strain ATCC 49037 / DSM 5601 / CCUG 37298 / CIP 103539 / LMG 7603 / PAl5).